Consider the following 610-residue polypeptide: Chitinase 63 (610 aa).

An N-terminal signal peptide occupies residues 1–30 (MRFRHKAAALAATLALPLAGLVGLASPAQA). The CBM2 domain occupies 31 to 134 (ATSATATFQK…KINGGSCDGS (104 aa)). Disordered regions lie at residues 125-153 (KINGGSCDGSSVPGDEAPSAPGTPTASNI) and 208-239 (ARDTGDQTGPASGSVKVTTTGGDGGEPNPNPG). Positions 144–229 (APGTPTASNI…GSVKVTTTGG (86 aa)) constitute a Fibronectin type-III domain. Polar residues predominate over residues 213-224 (DQTGPASGSVKV). In terms of domain architecture, GH18 spans 241-610 (EVKMGYFTNW…LVSAIDSGLK (370 aa)). Chitin is bound by residues 313–314 (DQ) and 340–343 (GGWT). Glu383 (proton donor) is an active-site residue. Chitin-binding positions include Tyr384, 450–453 (MTYD), and Trp590.

This sequence belongs to the glycosyl hydrolase 18 family. Chitinase class II subfamily.

It catalyses the reaction Random endo-hydrolysis of N-acetyl-beta-D-glucosaminide (1-&gt;4)-beta-linkages in chitin and chitodextrins.. The protein is Chitinase 63 (chtA) of Streptomyces plicatus.